The sequence spans 399 residues: O-glucosyltransferase rumi homolog (399 aa).

The N-terminal stretch at Met-1 to Ser-18 is a signal peptide. Asn-19 and Asn-67 each carry an N-linked (GlcNAc...) asparagine glycan. Disulfide bonds link Cys-66–Cys-73, Cys-71–Cys-373, Cys-118–Cys-124, and Cys-277–Cys-300. Asp-149 serves as the catalytic Proton donor/acceptor. The tract at residues Ala-189–Pro-194 is interaction with the consensus sequence C-X-S-X-[PA]-C in peptide substrates. UDP-alpha-D-glucose-binding positions include Arg-224–Thr-228, Arg-232, Val-271–Leu-273, and Ala-289–Arg-293.

This sequence belongs to the glycosyltransferase 90 family.

The protein localises to the endoplasmic reticulum lumen. Its subcellular location is the secreted. The protein operates within protein modification; protein glycosylation. In terms of biological role, protein O-glucosyltransferase. Catalyzes the reaction that attaches glucose through an O-glycosidic linkage to a conserved serine residue found in the consensus sequence C-X-S-X-[PA]-C in epidermal growth factor-like repeats. Regulates Notch signaling by glucosylating Notch in the ER, glucosylation is required for the correct folding and cleavage of Notch. This chain is O-glucosyltransferase rumi homolog, found in Anopheles gambiae (African malaria mosquito).